Reading from the N-terminus, the 2363-residue chain is Spectrin beta chain, non-erythrocytic 1 (2363 aa).

The residue at position 2 (threonine 2) is an N-acetylthreonine. The actin-binding stretch occupies residues 2-275; it reads TTTVATDYDN…IITYVVTYYH (274 aa). Residues isoleucine 14 and serine 36 each carry the phosphoserine modification. Calponin-homology (CH) domains lie at 54-158 and 173-278; these read AVQK…LRFQ and KSAK…HYFS. Lysine 90 carries the N6-acetyllysine modification. Residue serine 228 is modified to Phosphoserine. 15 Spectrin repeats span residues 303-411, 423-525, 530-636, 639-742, 745-847, 850-952, 957-1060, 1063-1166, 1170-1259, 1276-1376, 1381-1482, 1486-1590, 1592-1696, 1698-1801, and 1805-1907; these read MIEK…LALR, LARR…QRLE, LQKI…RLEE, RLWK…RLEE, LLHQ…ALQD, ALYK…DALL, IQNY…SLGE, KLQQ…NLLS, AYQQ…RHRK, DLQK…AQRL, KAEL…HNLL, EIHQ…RLEE, HKAQ…KLDE, HRLF…TQIL, and YELH…RVRL. 6 positions are modified to phosphoserine: serine 817, serine 903, serine 1057, serine 1076, serine 1079, and serine 1237. Phosphoserine is present on residues serine 1388, serine 1447, and serine 1557. Residues 1563–2093 form an interaction with ANK2 region; that stretch reads IRQRLADLKQ…LLEVRRQQEE (531 aa). At tyrosine 1805 the chain carries Phosphotyrosine. Residues lysine 1815, lysine 1913, and lysine 1989 each carry the N6-acetyllysine modification. Spectrin repeat units lie at residues 1914-2014 and 2018-2097; these read FRFF…EWLR and EVHQ…EERK. The disordered stretch occupies residues 2089–2193; that stretch reads RQQEEEERKR…AATLPARTLE (105 aa). A phosphoserine mark is found at serine 2102, serine 2127, and serine 2137. Over residues 2115 to 2130 the composition is skewed to polar residues; sequence SQQWDTSKGDQVSQNG. The residue at position 2146 (threonine 2146) is a Phosphothreonine. Serine 2147 bears the Phosphoserine mark. The mediates interaction with CAMSAP1 stretch occupies residues 2148 to 2176; that stretch reads EMVNGAAEQRTSSKESSPVPSPTLDRKAK. Threonine 2158 carries the post-translational modification Phosphothreonine. Phosphoserine occurs at positions 2159, 2160, 2163, 2164, and 2168. A Phosphothreonine modification is found at threonine 2170. Serine 2183 bears the Phosphoserine mark. Residues threonine 2186 and threonine 2194 each carry the phosphothreonine modification. Positions 2196–2306 constitute a PH domain; it reads AAQMEGFLNR…WIQAISSAIS (111 aa). Residues 2308 to 2363 form a disordered region; the sequence is DKHDTSASTQSTPASSRAQTLPTSVVTITSESSPGKREKDKEKDKEKRFSLFGKKK. 2 positions are modified to phosphoserine: serine 2313 and serine 2318. Over residues 2313 to 2327 the composition is skewed to low complexity; sequence SASTQSTPASSRAQT. Residue threonine 2319 is modified to Phosphothreonine. Serine 2323 carries O-linked (GlcNAc) serine glycosylation. Threonine 2327 carries the phosphothreonine modification. The span at 2328–2340 shows a compositional bias: polar residues; sequence LPTSVVTITSESS. Phosphoserine occurs at positions 2339 and 2340. Positions 2341 to 2356 are enriched in basic and acidic residues; it reads PGKREKDKEKDKEKRF.

The protein belongs to the spectrin family. As to quaternary structure, interacts with ANK2. Interacts with CPNE4 (via VWFA domain). Like erythrocyte spectrin, the spectrin-like proteins are capable to form dimers which can further associate to tetramers. Interacts with CAMSAP1. Can form heterodimers with SPTAN1. Isoform 2 is present in brain, heart, kidney and liver (at protein level).

The protein localises to the cytoplasm. It is found in the cytoskeleton. It localises to the endomembrane system. The protein resides in the myofibril. Its subcellular location is the sarcomere. The protein localises to the m line. It is found in the cytosol. It localises to the cell membrane. Its function is as follows. Fodrin, which seems to be involved in secretion, interacts with calmodulin in a calcium-dependent manner and is thus candidate for the calcium-dependent movement of the cytoskeleton at the membrane. Plays a critical role in central nervous system development and function. The protein is Spectrin beta chain, non-erythrocytic 1 (Sptbn1) of Mus musculus (Mouse).